A 140-amino-acid polypeptide reads, in one-letter code: Large ribosomal subunit protein uL11 (140 aa).

The protein belongs to the universal ribosomal protein uL11 family. Part of the ribosomal stalk of the 50S ribosomal subunit. Interacts with L10 and the large rRNA to form the base of the stalk. L10 forms an elongated spine to which L12 dimers bind in a sequential fashion forming a multimeric L10(L12)X complex. One or more lysine residues are methylated.

Its function is as follows. Forms part of the ribosomal stalk which helps the ribosome interact with GTP-bound translation factors. The sequence is that of Large ribosomal subunit protein uL11 from Staphylococcus epidermidis (strain ATCC 35984 / DSM 28319 / BCRC 17069 / CCUG 31568 / BM 3577 / RP62A).